The following is a 295-amino-acid chain: UDP-N-acetylenolpyruvoylglucosamine reductase (295 aa).

One can recognise an FAD-binding PCMH-type domain in the interval 23–188 (KVGGPADFLA…ISAKFALKPG (166 aa)). Residue Arg167 is part of the active site. The Proton donor role is filled by Ser217. The active site involves Glu287.

It belongs to the MurB family. FAD is required as a cofactor.

The protein localises to the cytoplasm. The enzyme catalyses UDP-N-acetyl-alpha-D-muramate + NADP(+) = UDP-N-acetyl-3-O-(1-carboxyvinyl)-alpha-D-glucosamine + NADPH + H(+). It participates in cell wall biogenesis; peptidoglycan biosynthesis. Functionally, cell wall formation. In Streptococcus pyogenes serotype M3 (strain ATCC BAA-595 / MGAS315), this protein is UDP-N-acetylenolpyruvoylglucosamine reductase.